The following is an 830-amino-acid chain: Periplasmic nitrate reductase (830 aa).

The segment at residues 1-30 (MTTRREFIKRSAAVTAACTAGISLSGEASN) is a signal peptide (tat-type signal). The 4Fe-4S Mo/W bis-MGD-type domain maps to 40-96 (LKWSKAPCRFCGTGCSVNVAVKDNQVVATHGDIQSEVNRGLNCVKGYFLSKIMYGKD). Residues Cys-47, Cys-50, Cys-54, and Cys-82 each contribute to the [4Fe-4S] cluster site. Mo-bis(molybdopterin guanine dinucleotide) is bound by residues Lys-84, Gln-151, Asn-176, Cys-180, 213 to 220 (WGSNMAEM), 244 to 248 (STFQH), Met-374, Gln-378, Asn-484, 510 to 511 (SE), Lys-533, Asp-560, and 720 to 729 (TGRVLEHWHS). Trp-796 is a binding site for substrate. 2 residues coordinate Mo-bis(molybdopterin guanine dinucleotide): Asn-804 and Lys-821.

The protein belongs to the prokaryotic molybdopterin-containing oxidoreductase family. NasA/NapA/NarB subfamily. Component of the periplasmic nitrate reductase NapAB complex composed of NapA and NapB. Requires [4Fe-4S] cluster as cofactor. The cofactor is Mo-bis(molybdopterin guanine dinucleotide). In terms of processing, predicted to be exported by the Tat system. The position of the signal peptide cleavage has not been experimentally proven.

The protein localises to the periplasm. It catalyses the reaction 2 Fe(II)-[cytochrome] + nitrate + 2 H(+) = 2 Fe(III)-[cytochrome] + nitrite + H2O. Catalytic subunit of the periplasmic nitrate reductase complex NapAB. Receives electrons from NapB and catalyzes the reduction of nitrate to nitrite. In Hahella chejuensis (strain KCTC 2396), this protein is Periplasmic nitrate reductase.